The sequence spans 314 residues: Protein EXORDIUM (314 aa).

The signal sequence occupies residues 1 to 21; the sequence is MYLLVFKLFLFLSLLQISVSA.

This sequence belongs to the EXORDIUM family. In terms of tissue distribution, expressed in root tips, vascular tissue of roots, shoot apex, rosette leaves and embryos.

Its subcellular location is the secreted. The protein localises to the extracellular space. It is found in the apoplast. Functionally, required for cell expansion in leaves. May mediate brassinosteroid (BR)-induced leaf growth. May play a role in the control of BR responses in roots. May be involved in signaling processes that coordinate BR responses with environmental or developmental signals. This chain is Protein EXORDIUM (EXO), found in Arabidopsis thaliana (Mouse-ear cress).